The following is a 701-amino-acid chain: Acetyl-coenzyme A synthetase, cytoplasmic (701 aa).

The disordered stretch occupies residues 1–41; the sequence is MGLPEERVRSGSGSRGQEEAGAGGRARSWSPPPEVSRSAHV. The interaction with TFEB stretch occupies residues 1 to 107; the sequence is MGLPEERVRS…GATTNICYNV (107 aa). Phosphoserine is present on residues S28, S30, and S36. Position 219 to 222 (219 to 222) interacts with CoA; that stretch reads RGEK. 3 positions are modified to phosphoserine: S263, S265, and S267. Residue T363 coordinates CoA. N6-acetyllysine is present on K418. ATP contacts are provided by residues 439 to 441, 463 to 468, D552, and R567; these read GEP and DTFWQT. S575 and R636 together coordinate CoA. The short motif at 656–668 is the Nuclear localization signal element; it reads KTRSGKIMRRVLR. S659 carries the phosphoserine; by AMPK modification. Residue K661 is modified to N6-acetyllysine.

The protein belongs to the ATP-dependent AMP-binding enzyme family. In terms of assembly, monomer. Interacts with TFEB. AMPK-mediated phosphorylated form at Ser-659 interacts with KPNA1; this interaction results in nuclear translocation of ACSS2. Interacts with the 'Thr-172' phosphorylated form of PRKAA2. Interacts with CREBBP. Reversibly acetylated at Lys-661. The acetyl-CoA synthase activity is inhibited by acetylation and activated by deacetylation mediated by the deacetylases SIRT1 and SIRT3. In terms of processing, glucose deprivation results in its AMPK-dependent phosphorylation at Ser-659, which leads to exposure of its nuclear localization signal, required for its interaction with KPNA1 and subsequent translocation to the nucleus.

The protein localises to the cytoplasm. The protein resides in the cytosol. It localises to the nucleus. It carries out the reaction acetate + ATP + CoA = acetyl-CoA + AMP + diphosphate. The catalysed reaction is propanoate + ATP + CoA = propanoyl-CoA + AMP + diphosphate. Its activity is regulated as follows. Inhibited by acetylation at Lys-661 and activated by deacetylation mediated by the deacetylases SIRT1 and SIRT3. Functionally, catalyzes the synthesis of acetyl-CoA from short-chain fatty acids. Acetate is the preferred substrate. Can also utilize propionate with a much lower affinity. Nuclear ACSS2 promotes glucose deprivation-induced lysosomal biogenesis and autophagy, tumor cell survival and brain tumorigenesis. Glucose deprivation results in AMPK-mediated phosphorylation of ACSS2 leading to its translocation to the nucleus where it binds to TFEB and locally produces acetyl-CoA for histone acetylation in the promoter regions of TFEB target genes thereby activating their transcription. The regulation of genes associated with autophagy and lysosomal activity through ACSS2 is important for brain tumorigenesis and tumor survival. Acts as a chromatin-bound transcriptional coactivator that up-regulates histone acetylation and expression of neuronal genes. Can be recruited to the loci of memory-related neuronal genes to maintain a local acetyl-CoA pool, providing the substrate for histone acetylation and promoting the expression of specific genes, which is essential for maintaining long-term spatial memory. The sequence is that of Acetyl-coenzyme A synthetase, cytoplasmic (ACSS2) from Homo sapiens (Human).